The following is a 170-amino-acid chain: Inducible metalloproteinase inhibitor protein (170 aa).

A signal peptide spans 1 to 19; it reads MKCLLYLCLWCYCVLVSSS. Residues N48 and N149 are each glycosylated (N-linked (GlcNAc...) asparagine).

Cleaved. Post-translationally, five disulfide bonds are present. When artificially cleaved by thermolysin between Asn-56 and Ile-57, the two obtained chains (called heavy and light chains) remain linked. In terms of processing, the N-terminus is blocked.

Inhibits thermolysin, bacillolysin and pseudolysin, B.polymyxa metalloprotease and human MMP1 and MMP3. No activity on trypsin or cysteine protease papain. This is Inducible metalloproteinase inhibitor protein (IMPI) from Galleria mellonella (Greater wax moth).